We begin with the raw amino-acid sequence, 920 residues long: Androgen receptor (920 aa).

The modulating stretch occupies residues 1 to 559; it reads MEVQLGLGRV…IDYYFPPQKT (559 aa). The segment at 1–587 is interaction with ZNF318; sequence MEVQLGLGRV…GSCKVFFKRA (587 aa). Disordered regions lie at residues 36–167 and 195–228; these read NPGP…LSLL and QQQQ…YLGG. The segment covering 44 to 91 has biased composition (low complexity); it reads AASAAPPGASLLLLQQQQQQQQQQQQQQQQQQQQQQQETSPRQQQQQQ. Residue serine 83 is modified to Phosphoserine; by CDK9. Serine 96 is subject to Phosphoserine. Over residues 195–217 the composition is skewed to low complexity; the sequence is QQQQQEAVSEGSSSGRAREASGA. The segment covering 218–228 has biased composition (polar residues); sequence PTSSKDNYLGG. Position 225 is a phosphotyrosine; by CSK (tyrosine 225). Serine 258 is modified (phosphoserine). Position 269 is a phosphotyrosine; by CSK and TNK2 (tyrosine 269). A phosphotyrosine; by CSK mark is found at tyrosine 309, tyrosine 348, tyrosine 359, and tyrosine 364. Tyrosine 365 carries the phosphotyrosine; by CSK and TNK2 modification. Lysine 388 is covalently cross-linked (Glycyl lysine isopeptide (Lys-Gly) (interchain with G-Cter in SUMO)). Tyrosine 395 is modified (phosphotyrosine; by CSK). Lysine 521 is covalently cross-linked (Glycyl lysine isopeptide (Lys-Gly) (interchain with G-Cter in SUMO)). Phosphotyrosine; by CSK is present on residues tyrosine 535 and tyrosine 552. An interaction with LPXN region spans residues 552 to 919; it reads YYFPPQKTCL…GKVKPIYFHT (368 aa). 2 NR C4-type zinc fingers span residues 560 to 580 and 596 to 620; these read CLIC…CGSC and CASR…LRKC. The nuclear receptor DNA-binding region spans 560-632; that stretch reads CLICGDEASG…AGMTLGARKL (73 aa). The interaction with HIPK3 stretch occupies residues 572 to 662; the sequence is YGALTCGSCK…TEETTQKLTV (91 aa). An interaction with CCAR1 region spans residues 592 to 919; the sequence is QKYLCASRND…GKVKPIYFHT (328 aa). Residues 625–919 are interaction with KAT7; it reads MTLGARKLKK…GKVKPIYFHT (295 aa). At serine 651 the chain carries Phosphoserine; by STK4/MST1. In terms of domain architecture, NR LBD spans 669–900; the sequence is ECQPIFLNVL…DFPEMMAEII (232 aa). 2 residues coordinate 17beta-hydroxy-5alpha-androstan-3-one: asparagine 706 and arginine 753. Glycyl lysine isopeptide (Lys-Gly) (interchain with G-Cter in ubiquitin) cross-links involve residues lysine 846 and lysine 848. Threonine 878 contacts 17beta-hydroxy-5alpha-androstan-3-one. Tyrosine 916 is subject to Phosphotyrosine; by CSK.

The protein belongs to the nuclear hormone receptor family. NR3 subfamily. Binds DNA as a homodimer. Part of a ternary complex containing AR, EFCAB6/DJBP and PARK7. Interacts with HIPK3 and NR0B2 in the presence of androgen. The ligand binding domain interacts with KAT7/HBO1 in the presence of dihydrotestosterone. Interacts with EFCAB6/DJBP, PQBP1, RANBP9, RBAK, SPDEF, SRA1, TGFB1I1 and RREB1. Interacts with ZMIZ1/ZIMP10 and ZMIZ2/ZMIP7 which both enhance its transactivation activity. Interacts with SLC30A9 and RAD54L2/ARIP4. Interacts with MACROD1 (via macro domain). Interacts via the ligand-binding domain with LXXLL and FXXLF motifs from NCOA1, NCOA2, NCOA3 and MAGEA11. Interacts (via nuclear receptor DNA binding domain and nuclear receptor ligand binding domain) with NCOA4. The AR N-terminal poly-Gln region binds Ran resulting in enhancement of AR-mediated transactivation. Ran-binding decreases as the poly-Gln length increases. Interacts with HIP1 (via coiled coil domain). Interacts (via ligand-binding domain) with TRIM68. Interacts with TNK2. Interacts with USP26. Interacts with RNF6. Interacts (regulated by RNF6 probably through polyubiquitination) with RNF14; regulates AR transcriptional activity. Interacts with PRMT2 and TRIM24. Interacts with RACK1. Interacts with RANBP10; this interaction enhances dihydrotestosterone-induced AR transcriptional activity. Interacts with PRPF6 in a hormone-independent way; this interaction enhances dihydrotestosterone-induced AR transcriptional activity. Interacts with STK4/MST1. Interacts with ZIPK/DAPK3. Interacts with LPXN. Interacts with MAK. Part of a complex containing AR, MAK and NCOA3. Interacts with CRY1. Interacts with CCAR1 and GATA2. Interacts with ZNF318. Interacts with BUD31. Interacts with ARID4A. Interacts with ARID4B. Interacts (via NR LBD domain) with ZBTB7A; the interaction is direct and androgen-dependent. Interacts with NCOR1. Interacts with NCOR2. Interacts with CRY2 in a ligand-dependent manner. Post-translationally, sumoylated on Lys-388 (major) and Lys-521. Ubiquitinated. Deubiquitinated by USP26. 'Lys-6' and 'Lys-27'-linked polyubiquitination by RNF6 modulates AR transcriptional activity and specificity. Phosphorylated in prostate cancer cells in response to several growth factors including EGF. Phosphorylation is induced by c-Src kinase (CSK). Tyr-535 is one of the major phosphorylation sites and an increase in phosphorylation and Src kinase activity is associated with prostate cancer progression. Phosphorylation by TNK2 enhances the DNA-binding and transcriptional activity and may be responsible for androgen-independent progression of prostate cancer. Phosphorylation at Ser-83 by CDK9 regulates AR promoter selectivity and cell growth. Phosphorylation by PAK6 leads to AR-mediated transcription inhibition. In terms of processing, palmitoylated by ZDHHC7 and ZDHHC21. Palmitoylation is required for plasma membrane targeting and for rapid intracellular signaling via ERK and AKT kinases and cAMP generation. Mainly expressed in heart and skeletal muscle. In terms of tissue distribution, expressed in basal and stromal cells of the prostate (at protein level).

It is found in the nucleus. The protein localises to the cytoplasm. With respect to regulation, AIM-100 (4-amino-5,6-biaryl-furo[2,3-d]pyrimidine) suppresses TNK2-mediated phosphorylation at Tyr-269. Inhibits the binding of the Tyr-269 phosphorylated form to androgen-responsive enhancers (AREs) and its transcriptional activity. Its function is as follows. Steroid hormone receptors are ligand-activated transcription factors that regulate eukaryotic gene expression and affect cellular proliferation and differentiation in target tissues. Transcription factor activity is modulated by bound coactivator and corepressor proteins like ZBTB7A that recruits NCOR1 and NCOR2 to the androgen response elements/ARE on target genes, negatively regulating androgen receptor signaling and androgen-induced cell proliferation. Transcription activation is also down-regulated by NR0B2. Activated, but not phosphorylated, by HIPK3 and ZIPK/DAPK3. Lacks the C-terminal ligand-binding domain and may therefore constitutively activate the transcription of a specific set of genes independently of steroid hormones. This is Androgen receptor (AR) from Homo sapiens (Human).